The chain runs to 506 residues: Lysine--tRNA ligase (506 aa).

Mg(2+)-binding residues include E416 and E423.

The protein belongs to the class-II aminoacyl-tRNA synthetase family. Homodimer. Mg(2+) is required as a cofactor.

The protein localises to the cytoplasm. It carries out the reaction tRNA(Lys) + L-lysine + ATP = L-lysyl-tRNA(Lys) + AMP + diphosphate. The sequence is that of Lysine--tRNA ligase from Xylella fastidiosa (strain M12).